Reading from the N-terminus, the 266-residue chain is Flavin-dependent thymidylate synthase (266 aa).

The ThyX domain occupies 11–222 (GFIRLVDYMG…PLACASFERH (212 aa)). Residues serine 57, 80–82 (RHR), and glutamate 88 each bind FAD. DUMP contacts are provided by residues 77 to 80 (QWIR), 88 to 92 (EISGR), and arginine 161. The ThyX motif signature appears at 80 to 90 (RHRTARLNEIS). Residues 177-179 (DLH) and histidine 183 each bind FAD. Position 188 (arginine 188) interacts with dUMP. The Involved in ionization of N3 of dUMP, leading to its activation role is filled by arginine 188.

The protein belongs to the thymidylate synthase ThyX family. As to quaternary structure, homotetramer. Requires FAD as cofactor.

It carries out the reaction dUMP + (6R)-5,10-methylene-5,6,7,8-tetrahydrofolate + NADPH + H(+) = dTMP + (6S)-5,6,7,8-tetrahydrofolate + NADP(+). It participates in pyrimidine metabolism; dTTP biosynthesis. Catalyzes the reductive methylation of 2'-deoxyuridine-5'-monophosphate (dUMP) to 2'-deoxythymidine-5'-monophosphate (dTMP) while utilizing 5,10-methylenetetrahydrofolate (mTHF) as the methyl donor, and NADPH and FADH(2) as the reductant. The protein is Flavin-dependent thymidylate synthase of Treponema denticola (strain ATCC 35405 / DSM 14222 / CIP 103919 / JCM 8153 / KCTC 15104).